We begin with the raw amino-acid sequence, 346 residues long: Protein tas (346 aa).

Tyrosine 53 (proton donor) is an active-site residue. 234–244 serves as a coordination point for NADP(+); that stretch reads SCLGFGTLTGK.

It belongs to the aldo/keto reductase family. Aldo/keto reductase 2 subfamily.

The chain is Protein tas (tas) from Escherichia coli (strain K12).